A 315-amino-acid polypeptide reads, in one-letter code: Glutathione synthetase (315 aa).

The ATP-grasp domain occupies 125 to 310; sequence KLYTAWFADL…ITGMLMDAIE (186 aa). 151 to 207 is a binding site for ATP; it reads WEKHGDIIMKPLDGMGGASIFRVKEGDPNIGVIAETLTELGNRYCMAQNYLPAIKDG. Mg(2+) contacts are provided by Glu281 and Asn283.

This sequence belongs to the prokaryotic GSH synthase family. It depends on Mg(2+) as a cofactor. Requires Mn(2+) as cofactor.

The enzyme catalyses gamma-L-glutamyl-L-cysteine + glycine + ATP = glutathione + ADP + phosphate + H(+). It functions in the pathway sulfur metabolism; glutathione biosynthesis; glutathione from L-cysteine and L-glutamate: step 2/2. The polypeptide is Glutathione synthetase (Salmonella typhi).